A 182-amino-acid polypeptide reads, in one-letter code: uncharacterized protein (182 aa).

A disordered region spans residues 40-182 (LLKTDDDDDD…EEIQRNQKGN (143 aa)). Residues 52 to 86 (NNININNNNATITTTSTTTTTTTTSTTKTFTISTD) show a composition bias toward low complexity. The span at 87 to 100 (NYDEDVNDDQDEGD) shows a compositional bias: acidic residues. 2 stretches are compositionally biased toward low complexity: residues 104 to 134 (NNNN…NNNN) and 148 to 157 (DLDFNNQNNN). Over residues 165–182 (FLSKDDNIEEIQRNQKGN) the composition is skewed to basic and acidic residues.

This is an uncharacterized protein from Dictyostelium discoideum (Social amoeba).